A 557-amino-acid polypeptide reads, in one-letter code: Potassium-transporting ATPase potassium-binding subunit (557 aa).

Helical transmembrane passes span 5 to 25 (GFLL…PLGS), 63 to 83 (LCAI…MLLG), 132 to 152 (GLTV…FAFI), 170 to 190 (LLRI…LFLI), 253 to 273 (FVQM…FGEV), 283 to 303 (LLWA…WAEV), 329 to 349 (VLVS…AVIA), 356 to 376 (ALGG…FGGV), 379 to 399 (GLYG…LMIG), 416 to 436 (LTAL…ALAM), 484 to 504 (LLAF…MAIA), and 526 to 546 (LFVG…FIPA).

It belongs to the KdpA family. The system is composed of three essential subunits: KdpA, KdpB and KdpC.

The protein localises to the cell inner membrane. Its function is as follows. Part of the high-affinity ATP-driven potassium transport (or Kdp) system, which catalyzes the hydrolysis of ATP coupled with the electrogenic transport of potassium into the cytoplasm. This subunit binds the periplasmic potassium ions and delivers the ions to the membrane domain of KdpB through an intramembrane tunnel. The chain is Potassium-transporting ATPase potassium-binding subunit from Shigella boydii serotype 18 (strain CDC 3083-94 / BS512).